The following is a 232-amino-acid chain: 7-cyano-7-deazaguanine synthase (232 aa).

ATP is bound at residue 7 to 17; the sequence is CSGGLDSVSLA. Zn(2+) contacts are provided by C185, C193, C196, and C199.

This sequence belongs to the QueC family. Zn(2+) serves as cofactor.

The enzyme catalyses 7-carboxy-7-deazaguanine + NH4(+) + ATP = 7-cyano-7-deazaguanine + ADP + phosphate + H2O + H(+). It functions in the pathway purine metabolism; 7-cyano-7-deazaguanine biosynthesis. Functionally, catalyzes the ATP-dependent conversion of 7-carboxy-7-deazaguanine (CDG) to 7-cyano-7-deazaguanine (preQ(0)). The chain is 7-cyano-7-deazaguanine synthase from Brucella anthropi (strain ATCC 49188 / DSM 6882 / CCUG 24695 / JCM 21032 / LMG 3331 / NBRC 15819 / NCTC 12168 / Alc 37) (Ochrobactrum anthropi).